The primary structure comprises 137 residues: uncharacterized protein (137 aa).

Belongs to the ycf72 family.

The protein resides in the plastid. The protein localises to the chloroplast. This is an uncharacterized protein from Saccharum hybrid (Sugarcane).